Here is a 99-residue protein sequence, read N- to C-terminus: Small ribosomal subunit protein bS6c (99 aa).

The protein belongs to the bacterial ribosomal protein bS6 family.

It localises to the plastid. It is found in the chloroplast. Functionally, binds together with bS18 to 16S ribosomal RNA. This chain is Small ribosomal subunit protein bS6c, found in Cyanidioschyzon merolae (strain NIES-3377 / 10D) (Unicellular red alga).